The primary structure comprises 273 residues: Transmembrane protein 45A (273 aa).

The next 5 membrane-spanning stretches (helical) occupy residues 8–27, 55–79, 108–131, 153–171, and 217–236; these read ALPG…KNIL, VVVL…ALIL, IICF…AIFV, LLVF…EFLV, and MFLS…LIGV.

Belongs to the TMEM45 family.

It localises to the membrane. This is Transmembrane protein 45A (Tmem45a) from Mus musculus (Mouse).